A 223-amino-acid polypeptide reads, in one-letter code: Alpha-enolase (223 aa).

S8 provides a ligand contact to Mg(2+). Phosphotyrosine is present on Y12. K25 is subject to N6-acetyllysine. Position 39 (E39) interacts with substrate. An N6-acetyllysine modification is found at K61. E69 serves as the catalytic Proton donor. K87 bears the N6-acetyllysine; alternate mark. K87 is subject to N6-malonyllysine; alternate. Residue K87 is modified to N6-succinyllysine; alternate. Residues D99 and D119 each contribute to the Mg(2+) site. D119 serves as a coordination point for substrate. An N6-acetyllysine mark is found at K133 and K141. K141 serves as the catalytic Proton acceptor. Substrate contacts are provided by residues 168–171 (SHRS) and K192. A required for interaction with PLG region spans residues 202 to 223 (YNQILRIEEELGSKSFRNPLAK). K215 is modified (N6-acetyllysine; alternate). N6-malonyllysine; alternate is present on K215. K215 bears the N6-succinyllysine; alternate mark.

Belongs to the enolase family. As to quaternary structure, mammalian enolase is composed of 3 isozyme subunits, alpha, beta and gamma, which can form homodimers or heterodimers which are cell-type and development-specific. ENO1 interacts with PLG in the neuronal plasma membrane and promotes its activation. The C-terminal lysine is required for this binding. Interacts with ENO4 and PGAM2. Interacts with CMTM6. It depends on Mg(2+) as a cofactor. In terms of processing, ISGylated. Post-translationally, lysine 2-hydroxyisobutyrylation (Khib) by p300/EP300 activates the phosphopyruvate hydratase activity.

The protein localises to the cytoplasm. The protein resides in the cell membrane. The catalysed reaction is (2R)-2-phosphoglycerate = phosphoenolpyruvate + H2O. It functions in the pathway carbohydrate degradation; glycolysis; pyruvate from D-glyceraldehyde 3-phosphate: step 4/5. Its function is as follows. Glycolytic enzyme the catalyzes the conversion of 2-phosphoglycerate to phosphoenolpyruvate. In addition to glycolysis, involved in various processes such as growth control, hypoxia tolerance and allergic responses. May also function in the intravascular and pericellular fibrinolytic system due to its ability to serve as a receptor and activator of plasminogen on the cell surface of several cell-types such as leukocytes and neurons. Stimulates immunoglobulin production. This is Alpha-enolase from Mesocricetus auratus (Golden hamster).